A 745-amino-acid chain; its full sequence is MSQVPTTYSFDAPTDFINFSSLDAEEDTENIDSWFDEKANLENKFLRQRGIGEPFQGKNSLRKAKLQQGFVTPLKAVDNTYHKETEKENLQKQSIPSNDCSSLDAKRAVSGNTPVQPQRRSIRLSAQKDLEQKEKNHVASVEMKAKRCVAPATDCPPQKRMKVSHKKKLEEEEEGSAPATSRKNERETLEKAKGKHTVPGVPPAREKVLKSTEEQEIEKRLRMQQEVVELRRKNEEFKKLALAGPGQPVKKSTSQVTKTVDFHFLTDERIKQHPKNQEEYKEVNFMSELRKHSSTPARGTRGCTIIKPFNLSKGKKRTFDEAASTYVPIAQQVEAFHKRTPNRYHLRNKKDESLLPSKSVNKIARDPQTPILQTKYRTRAVTCKSTAEQEAEELEKLQQYKFKARELDPRIFESGPILPKRAPVKPPTQPVGFDLEIEKRIHERESKKKTEDEQFEFHSRPCPTKILEDVVGVPEKKVIPATVPKSPVFALKNRIRVPIKDEEEEKPVVIKAQPVPHYGVPYKPHIAEARNVEVCPFSFDTRDKERQLQKEKKIKEMQKGEVPKFKALPVPHFDTINLPEKKVKNVTQAEPFSLETDKRGAYKAEMWKHQLEEEQKQQKDAACFKARPNTVIFQEPFVPKKEKKSLAENPSGSLVQEPFQLATERRAKERQELEKKMAEVEAWKLQQLEEVRQQEEEQQKEELARLRKELVHKANPIRKYAAVEVKSSELPLTVPVSPKFSTRFQ.

Position 72 is a phosphothreonine (threonine 72). Positions 84 to 217 (ETEKENLQKQ…VLKSTEEQEI (134 aa)) are disordered. Composition is skewed to polar residues over residues 91 to 101 (QKQSIPSNDCS) and 110 to 119 (SGNTPVQPQR). A phosphoserine mark is found at serine 121 and serine 125. 3 stretches are compositionally biased toward basic and acidic residues: residues 126 to 137 (AQKDLEQKEKNH), 182 to 192 (RKNERETLEKA), and 204 to 217 (AREKVLKSTEEQEI). N6-acetyllysine is present on lysine 128. Serine 294 carries the post-translational modification Phosphoserine. Lysine 307 is subject to N6-acetyllysine. Serine 312 is subject to Phosphoserine. Threonine 340 carries the post-translational modification Phosphothreonine. Serine 359 is subject to Phosphoserine. The residue at position 369 (threonine 369) is a Phosphothreonine. Lysine 375 carries the post-translational modification N6-acetyllysine. A Glycyl lysine isopeptide (Lys-Gly) (interchain with G-Cter in SUMO2) cross-link involves residue lysine 477. Phosphoserine is present on serine 486. Residues lysine 500 and lysine 640 each participate in a glycyl lysine isopeptide (Lys-Gly) (interchain with G-Cter in SUMO2) cross-link. The residue at position 737 (serine 737) is a Phosphoserine. Lysine 739 participates in a covalent cross-link: Glycyl lysine isopeptide (Lys-Gly) (interchain with G-Cter in SUMO2).

Belongs to the TPX2 family. As to quaternary structure, interacts with AURKA. Interacts with importin-alpha; leading to inactivate TPX2. Interacts with HNRNPU; this interaction recruits HNRNPU to spindle microtubules (MTs). Interacts with BCL2L10. Interacts with KIF11.

The protein resides in the nucleus. The protein localises to the cytoplasm. Its subcellular location is the cytoskeleton. It is found in the spindle. It localises to the spindle pole. Its function is as follows. Spindle assembly factor required for normal assembly of mitotic spindles. Required for normal assembly of microtubules during apoptosis. Required for chromatin and/or kinetochore dependent microtubule nucleation. Mediates AURKA localization to spindle microtubules. Activates AURKA by promoting its autophosphorylation at 'Thr-288' and protects this residue against dephosphorylation. TPX2 is inactivated upon binding to importin-alpha. At the onset of mitosis, GOLGA2 interacts with importin-alpha, liberating TPX2 from importin-alpha, allowing TPX2 to activate AURKA kinase and stimulate local microtubule nucleation. In Mus musculus (Mouse), this protein is Targeting protein for Xklp2 (Tpx2).